Consider the following 256-residue polypeptide: Hypodermin-B (256 aa).

The N-terminal stretch at 1–22 (MLKFVILVCSVACVFGAVVPGG) is a signal peptide. A propeptide spans 23–30 (MLPQLDGR) (activation peptide). Residues 31–254 (IVGGFEADIE…VRSWITENAK (224 aa)) enclose the Peptidase S1 domain. Cysteines 56 and 72 form a disulfide. Catalysis depends on charge relay system residues histidine 71 and aspartate 116. Disulfide bonds link cysteine 180-cysteine 197 and cysteine 206-cysteine 230. Serine 210 serves as the catalytic Charge relay system.

This sequence belongs to the peptidase S1 family.

The protein localises to the secreted. In terms of biological role, protease that shows preferential cleavage after Arg and Lys residues. The polypeptide is Hypodermin-B (Hypoderma lineatum (Early cattle grub)).